An 818-amino-acid chain; its full sequence is Catenin beta (818 aa).

Composition is skewed to polar residues over residues 1 to 21 (METY…TPQG) and 48 to 66 (GDSG…SVSS). Disordered regions lie at residues 1–24 (METY…GQYM) and 48–71 (GDSG…HGLD). ARM repeat units follow at residues 164–203 (NYQD…QLSK), 248–287 (RQGL…NLLL), 412–451 (DAAT…NLTC), 454–495 (QRNK…HLTS), 501–541 (EMAQ…NLAL), 543–582 (PANH…NTSA), and 648–687 (KEGA…RMSE). The interval 732 to 818 (QGFRGYQGSG…QMAAWFDTDL (87 aa)) is disordered.

This sequence belongs to the beta-catenin family.

The protein localises to the cytoplasm. It is found in the cytoskeleton. Binds to the cytoplasmic domain of the cell-cell adhesion molecule E-cadherin, and perhaps to other (membrane) proteins. The association of catenins to cadherins produces a complex which is linked to the actin filament network, and which seems to be of primary importance for cadherins cell-adhesion properties. The protein is Catenin beta of Urechis caupo (Innkeeper worm).